Consider the following 204-residue polypeptide: Guanylate kinase (204 aa).

A Guanylate kinase-like domain is found at 16 to 196 (AKVIIFSAPS…AKAHALKVIK (181 aa)). An ATP-binding site is contributed by 23–30 (APSGSGKS).

This sequence belongs to the guanylate kinase family.

The protein resides in the cytoplasm. It catalyses the reaction GMP + ATP = GDP + ADP. Its function is as follows. Essential for recycling GMP and indirectly, cGMP. The chain is Guanylate kinase from Bacteroides fragilis (strain ATCC 25285 / DSM 2151 / CCUG 4856 / JCM 11019 / LMG 10263 / NCTC 9343 / Onslow / VPI 2553 / EN-2).